We begin with the raw amino-acid sequence, 1198 residues long: Phosphatidylinositol-3,5-bisphosphate 3-phosphatase MTMR3 (1198 aa).

A Phosphoserine modification is found at Ser-8. In terms of domain architecture, Myotubularin phosphatase spans 155 to 576 (EHVTSRFKNE…RNLMLWSAVY (422 aa)). The span at 265–280 (SRSSGSKLSTRNTSRD) shows a compositional bias: polar residues. The disordered stretch occupies residues 265–285 (SRSSGSKLSTRNTSRDFPNGG). A 1,2-diacyl-sn-glycero-3-phospho-(1D-myo-inositol-3,5-bisphosphate)-binding residues include Asn-326, Asn-351, and Ile-352. A 1,2-diacyl-sn-glycero-3-phospho-(1D-myo-inositol-3-phosphate) contacts are provided by Asn-326, Asn-351, and Ile-352. The Phosphocysteine intermediate role is filled by Cys-413. Ser-414, Asp-415, Gly-416, Trp-417, Asp-418, Arg-419, Lys-455, and Arg-459 together coordinate a 1,2-diacyl-sn-glycero-3-phospho-(1D-myo-inositol-3,5-bisphosphate). 6 residues coordinate a 1,2-diacyl-sn-glycero-3-phospho-(1D-myo-inositol-3-phosphate): Ser-414, Asp-415, Gly-416, Trp-417, Asp-418, and Arg-419. Residue Arg-459 coordinates a 1,2-diacyl-sn-glycero-3-phospho-(1D-myo-inositol-3-phosphate). A disordered region spans residues 590–612 (CAPYPAPGTSPDDPPLSRLPKTR). Pro residues predominate over residues 593–603 (YPAPGTSPDDP). Ser-613, Ser-633, Ser-647, and Ser-651 each carry phosphoserine. 3 disordered regions span residues 650–669 (LSSLAGPGEDPLSADSLGKP), 716–735 (EGKEDPLLEKESRRKTPEAS), and 855–891 (KSVSGPQGHHRSCLVNSGKDRLPQTMEPSPSETSLVE). Residues 716–732 (EGKEDPLLEKESRRKTP) are compositionally biased toward basic and acidic residues. Position 731 is a phosphothreonine (Thr-731). Phosphoserine is present on residues Ser-906 and Ser-909. 2 disordered regions span residues 933-974 (ETEN…SRQL) and 993-1019 (WLHSHSGRPSATSSPDQPSRSHLDDDG). Residues 999-1010 (GRPSATSSPDQP) are compositionally biased toward polar residues. A coiled-coil region spans residues 1029–1062 (QRLRQIESGHQQEVETLKKQVQELKSRLESQYLT). The residue at position 1064 (Ser-1064) is a Phosphoserine. The FYVE-type zinc finger occupies 1119–1179 (DHLAAHCYAC…VCKSCYSSLH (61 aa)). Positions 1125, 1128, 1141, 1144, 1149, 1152, 1171, and 1174 each coordinate Zn(2+).

This sequence belongs to the protein-tyrosine phosphatase family. Non-receptor class myotubularin subfamily. Forms heterodimers with MTMR4 that recruit both CEP55 and PLK1; occurs during early mitosis, regulates the phosphorylation of CEP55 by PLK1 and its recruitment to the midbody where it mediates cell abscission. Post-translationally, phosphorylated by CDK1 during mitosis.

It localises to the cytoplasm. The protein resides in the cytosol. The protein localises to the membrane. The catalysed reaction is a 1,2-diacyl-sn-glycero-3-phospho-(1D-myo-inositol-3,5-bisphosphate) + H2O = a 1,2-diacyl-sn-glycero-3-phospho-(1D-myo-inositol-5-phosphate) + phosphate. It carries out the reaction a 1,2-diacyl-sn-glycero-3-phospho-(1D-myo-inositol-3-phosphate) + H2O = a 1,2-diacyl-sn-glycero-3-phospho-(1D-myo-inositol) + phosphate. The enzyme catalyses 1,2-dihexadecanoyl-sn-glycero-3-phospho-(1D-myo-inositol-3-phosphate) + H2O = 1,2-dihexadecanoyl-sn-glycero-3-phospho-(1D-myo-inositol) + phosphate. It catalyses the reaction 1,2-dioctanoyl-sn-glycero-3-phospho-(1-D-myo-inositol-3-phosphate) + H2O = 1,2-dioctanoyl-sn-glycero-3-phospho-(1D-myo-inositol) + phosphate. The catalysed reaction is 1,2-dihexadecanoyl-sn-glycero-3-phospho-(1D-myo-inositol-3,5-phosphate) + H2O = 1,2-dihexadecanoyl-sn-glycero-3-phospho-(1D-myo-inositol-5-phosphate) + phosphate. Its function is as follows. Lipid phosphatase that specifically dephosphorylates the D-3 position of phosphatidylinositol 3-phosphate and phosphatidylinositol 3,5-bisphosphate, generating phosphatidylinositol and phosphatidylinositol 5-phosphate. Decreases the levels of phosphatidylinositol 3-phosphate, a phospholipid found in cell membranes where it acts as key regulator of both cell signaling and intracellular membrane traffic. Could also have a molecular sequestering/adapter activity and regulate biological processes independently of its phosphatase activity. It includes the regulation of midbody abscission during mitotic cytokinesis. The protein is Phosphatidylinositol-3,5-bisphosphate 3-phosphatase MTMR3 of Homo sapiens (Human).